The sequence spans 1223 residues: DNA-directed RNA polymerase subunit beta' (1223 aa).

The Zn(2+) site is built by cysteine 60, cysteine 62, cysteine 75, and cysteine 78. 3 residues coordinate Mg(2+): aspartate 449, aspartate 451, and aspartate 453. Positions 818, 892, 899, and 902 each coordinate Zn(2+).

This sequence belongs to the RNA polymerase beta' chain family. As to quaternary structure, the RNAP catalytic core consists of 2 alpha, 1 beta, 1 beta' and 1 omega subunit. When a sigma factor is associated with the core the holoenzyme is formed, which can initiate transcription. It depends on Mg(2+) as a cofactor. The cofactor is Zn(2+).

It carries out the reaction RNA(n) + a ribonucleoside 5'-triphosphate = RNA(n+1) + diphosphate. Its function is as follows. DNA-dependent RNA polymerase catalyzes the transcription of DNA into RNA using the four ribonucleoside triphosphates as substrates. In Lactobacillus gasseri (strain ATCC 33323 / DSM 20243 / BCRC 14619 / CIP 102991 / JCM 1131 / KCTC 3163 / NCIMB 11718 / NCTC 13722 / AM63), this protein is DNA-directed RNA polymerase subunit beta'.